Reading from the N-terminus, the 444-residue chain is Protein kinase C and casein kinase substrate in neurons protein 1 (444 aa).

A phosphoserine mark is found at Ser2 and Ser79. Positions 13 to 283 constitute an F-BAR domain; that stretch reads EETTDSFWEV…AIRGADAQDD (271 aa). The stretch at 26 to 275 forms a coiled coil; sequence KRTVKRIDDG…QVYRELEQAI (250 aa). Thr184 carries the phosphothreonine modification. The segment at 313–384 is disordered; it reads AAKKEKQPKK…NGGSNPFDED (72 aa). A compositionally biased stretch (basic and acidic residues) spans 314 to 324; it reads AKKEKQPKKAE. Residues 336–358 show a composition bias toward polar residues; it reads ESTSQAGDRGSVSSYDRGQTYAT. 5 positions are modified to phosphoserine: Ser346, Ser348, Ser349, Ser361, and Ser365. The 60-residue stretch at 385–444 folds into the SH3 domain; the sequence is AKGVRVRALYDYDGQEQDELSFKAGDELTKLGEEDEQGWCRGRLDSGQLGLYPANYVEVV. Position 394 is a phosphotyrosine (Tyr394). Residues Ser405 and Ser430 each carry the phosphoserine modification.

It belongs to the PACSIN family. Homodimer. May form heterooligomers with other PACSINs. Interacts with MAPT. Interacts (via SH3 domain) with SYNJ1 and WASL. Interacts (via SH3 domain) with DNM1; the interaction is reduced by DNM1 phosphorylation. Interacts with DNM2 and DNM3. Interacts with both COBL and DBNL. Identified in a complex composed of COBL, PACSIN1 and WASL. Interacts with EHD1 and EHD3. Interacts with TRPV4. In terms of processing, phosphorylated by casein kinase 2 (CK2) and protein kinase C (PKC).

The protein resides in the cytoplasm. Its subcellular location is the cell projection. It localises to the synapse. The protein localises to the synaptosome. It is found in the ruffle membrane. The protein resides in the membrane. Its subcellular location is the cytoplasmic vesicle membrane. It localises to the cytosol. The protein localises to the cell membrane. Its function is as follows. Binds to membranes via its F-BAR domain and mediates membrane tubulation. Plays a role in the reorganization of the microtubule cytoskeleton via its interaction with MAPT; this decreases microtubule stability and inhibits MAPT-induced microtubule polymerization. Plays a role in cellular transport processes by recruiting DNM1, DNM2 and DNM3 to membranes. Plays a role in the reorganization of the actin cytoskeleton and in neuron morphogenesis via its interaction with COBL and WASL, and by recruiting COBL to the cell cortex. Plays a role in the regulation of neurite formation, neurite branching and the regulation of neurite length. Required for normal synaptic vesicle endocytosis; this process retrieves previously released neurotransmitters to accommodate multiple cycles of neurotransmission. Required for normal excitatory and inhibitory synaptic transmission. In Bos taurus (Bovine), this protein is Protein kinase C and casein kinase substrate in neurons protein 1 (PACSIN1).